The following is a 205-amino-acid chain: Large ribosomal subunit protein uL4 (205 aa).

Residues 47 to 70 (TRAQKSRAEVSGGGKKPFRQKGTG) are disordered.

It belongs to the universal ribosomal protein uL4 family. Part of the 50S ribosomal subunit.

Functionally, one of the primary rRNA binding proteins, this protein initially binds near the 5'-end of the 23S rRNA. It is important during the early stages of 50S assembly. It makes multiple contacts with different domains of the 23S rRNA in the assembled 50S subunit and ribosome. In terms of biological role, forms part of the polypeptide exit tunnel. This chain is Large ribosomal subunit protein uL4, found in Acinetobacter baylyi (strain ATCC 33305 / BD413 / ADP1).